The following is a 415-amino-acid chain: Sucrose permease (415 aa).

Topologically, residues 1-16 are cytoplasmic; the sequence is MALNIPFRNAYYRFAS. Residues 17–37 traverse the membrane as a helical segment; sequence SYSFLFFISWSLWWSLYAIWL. The Periplasmic segment spans residues 38-48; the sequence is KGHLGLTGTEL. The helical transmembrane segment at 49–69 threads the bilayer; the sequence is GTLYSVNQFTSILFMMFYGIV. Residues 70–77 are Cytoplasmic-facing; the sequence is QDKLGLKK. A helical transmembrane segment spans residues 78 to 98; sequence PLIWCMSFILVLTGPFMIYVY. Over 99–107 the chain is Periplasmic; the sequence is EPLLQSNFS. A helical membrane pass occupies residues 108–128; that stretch reads VGLILGALFFGLGYLAGCGLL. The Cytoplasmic segment spans residues 129 to 147; it reads DSFTEKMARNFHFEYGTAR. A helical transmembrane segment spans residues 148–167; that stretch reads AWGSFGYAIGAFFAGIFFSI. Residues 168–170 lie on the Periplasmic side of the membrane; the sequence is SPH. The chain crosses the membrane as a helical span at residues 171–190; that stretch reads INFWLVSLFGAVFMMINMRF. The Cytoplasmic portion of the chain corresponds to 191–220; that stretch reads KDKDHQCIAADAGGVKKEDFIAVFKDRNFW. A helical transmembrane segment spans residues 221–241; it reads VFVIFIVGTWSFYNIFDQQLF. At 242–260 the chain is on the periplasmic side; it reads PVFYAGLFESHDVGTRLYG. The helical transmembrane segment at 261–281 threads the bilayer; sequence YLNSFQVVLEALCMAIIPFFV. Residues 282–287 lie on the Cytoplasmic side of the membrane; the sequence is NRVGPK. The helical transmembrane segment at 288–308 threads the bilayer; sequence NALLIGVVIMALRILSCALFV. Over 309–311 the chain is Periplasmic; it reads NPW. The chain crosses the membrane as a helical span at residues 312 to 332; sequence IISLVKLLHAIEVPLCVISVF. Over 333–342 the chain is Cytoplasmic; it reads KYSVANFDKR. A helical membrane pass occupies residues 343–363; it reads LSSTIFLIGFQIASSLGIVLL. Over 364–377 the chain is Periplasmic; sequence STPTGILFDHAGYQ. A helical membrane pass occupies residues 378-398; the sequence is TVFFAISGIVCLMLLFGIFFL. At 399–415 the chain is on the cytoplasmic side; the sequence is SKKREQIVMETPVPSAI.

Belongs to the major facilitator superfamily. Oligosaccharide:H(+) symporter (OHS) (TC 2.A.1.5) family.

The protein localises to the cell inner membrane. It participates in glycan biosynthesis; sucrose metabolism. In terms of biological role, responsible for transport of sucrose into the cell, with the concomitant import of a proton (symport system). Can also transport maltose, fructose or lactulose, but not glucose, lactose or melibiose. The substrate specificity is directed toward the fructofuranosyl moiety of the substrate. This chain is Sucrose permease, found in Escherichia coli.